The sequence spans 237 residues: Orotidine 5'-phosphate decarboxylase (237 aa).

Substrate-binding positions include D11, K34, 61–70 (DLKLHDIPNT), T124, R186, Q195, G215, and R216. K63 acts as the Proton donor in catalysis.

It belongs to the OMP decarboxylase family. Type 1 subfamily. Homodimer.

The enzyme catalyses orotidine 5'-phosphate + H(+) = UMP + CO2. The protein operates within pyrimidine metabolism; UMP biosynthesis via de novo pathway; UMP from orotate: step 2/2. In terms of biological role, catalyzes the decarboxylation of orotidine 5'-monophosphate (OMP) to uridine 5'-monophosphate (UMP). The protein is Orotidine 5'-phosphate decarboxylase of Lactococcus lactis subsp. cremoris (strain MG1363).